Reading from the N-terminus, the 541-residue chain is Beta-hexosaminidase 1 (541 aa).

A signal peptide spans 1–20 (MSTNLLRLILLFITLSITSS). Residues Asn-44 and Asn-304 are each glycosylated (N-linked (GlcNAc...) asparagine). Cys-295 and Cys-337 are disulfide-bonded. Glu-332 functions as the Proton donor in the catalytic mechanism. Asn-340, Asn-352, and Asn-497 each carry an N-linked (GlcNAc...) asparagine glycan. Cys-511 and Cys-538 are disulfide-bonded.

It belongs to the glycosyl hydrolase 20 family. N-glycosylated. Expressed in roots, leaves, stems, flowers and siliques.

The protein localises to the vacuole. The enzyme catalyses Hydrolysis of terminal non-reducing N-acetyl-D-hexosamine residues in N-acetyl-beta-D-hexosaminides.. Inhibited by N-acetylcastanospermine, 2-acet-amido-1,2-dideoxynojirimycin and PUGNAc. In terms of biological role, has a broad substrate specificity. Can use synthetic substrates such as pyridylaminated chitotriose, pyridylaminated chitobiose, p-nitrophenyl-beta-N-acetylglucosaminide, p-nitrophenyl-2-acetamido-2-deoxy-beta-D-glucopyranoside (pNP-GlcNAc), p-nitrophenyl-2-acetamido-2-deoxy-beta-D-galactopyranoside (pNP-GalNAc), 4-methylumbelliferyl-2-acetamido-2-deoxy-beta-D-glucopyranoside (MU-GlcNAc), and 4-methylumbelliferyl-6-sulfo-2-acetamido-2-deoxy-beta-D-glucopyranoside (MU-GlcNAc-6SO(4)) as substrates. Removes terminal GlcNAc residues from alpha1,3- and alpha1,6-mannosyl branches of biantennary N-glycans without any strict branch preference. Required for the presence of paucimannosidic N-glycans in glycoproteins of roots and, to a lower extent, of leaves. This is Beta-hexosaminidase 1 (HEXO1) from Arabidopsis thaliana (Mouse-ear cress).